Here is an 831-residue protein sequence, read N- to C-terminus: Pleckstrin homology-like domain family B member 1 (831 aa).

The span at 1-11 shows a compositional bias: basic residues; sequence LTLGARGRRTR. Residues 1-73 form a disordered region; it reads LTLGARGRRT…PIPRERKNSI (73 aa). Arginine 6 carries the omega-N-methylarginine modification. Phosphoserine occurs at positions 12 and 14. The residue at position 16 (threonine 16) is a Phosphothreonine. Phosphoserine is present on residues serine 27, serine 33, serine 45, serine 49, serine 57, serine 72, serine 77, and serine 175. Polar residues predominate over residues 39 to 51; it reads GSLTGASPRQSPH. 2 disordered regions span residues 160–209 and 416–465; these read RSGE…LQGE and NGDM…QNGT. Residues 174–188 show a composition bias toward basic and acidic residues; it reads ESMERSDEENLKEEC. A coiled-coil region spans residues 180 to 306; that stretch reads DEENLKEECS…TETKLFEDLE (127 aa). Residues serine 421 and serine 467 each carry the phosphoserine modification. Low complexity predominate over residues 421-442; that stretch reads SPLPRTRSGPLPSSSGSSSSSS. A disordered region spans residues 584-603; the sequence is SMETSISTGGNSACSPDNMS. Residues 610-676 are a coiled coil; it reads MGKIEEMEKM…QQLVEKEVKL (67 aa). The region spanning 721–824 is the PH domain; sequence SKVCRGYLIK…WMDVIVTGAE (104 aa).

This is Pleckstrin homology-like domain family B member 1 (Phldb1) from Rattus norvegicus (Rat).